The chain runs to 123 residues: Large ribosomal subunit protein eL8 (123 aa).

This sequence belongs to the eukaryotic ribosomal protein eL8 family. As to quaternary structure, may be present in up to 3 copies per 70S ribosome. Part of the 50S ribosomal subunit, where it binds 23S rRNA at its canonical site near the L1 stalk, as well as a possible second 50S binding site near helix 25 and a possible third site on the beak of the 30S subunit. Component of box C/D small ribonucleoprotein (sRNP) particles that contain rpl7ae, FlpA and nop5, plus a guide RNA. These sRNP particles form homodimers, giving rise to an asymmetric holoenzyme. Probably part of the RNase P complex.

It is found in the cytoplasm. Multifunctional RNA-binding protein that recognizes the K-turn motif in ribosomal RNA, the RNA component of RNase P, box H/ACA, box C/D and box C'/D' sRNAs. Component of the 70S ribosome. Component of a box C/D small ribonucleoprotein (sRNP) particle that is involved in pre-rRNA and tRNA processing. Utilizes the methyl donor S-adenosyl-L-methionine to catalyze the site-specific 2'-hydroxyl methylation of ribose moieties in rRNA and tRNA. Site specificity is provided by a guide RNA that base pairs with the substrate. Methylation occurs at a characteristic distance from the sequence involved in base pairing with the guide RNA. This chain is Large ribosomal subunit protein eL8, found in Pyrococcus furiosus (strain ATCC 43587 / DSM 3638 / JCM 8422 / Vc1).